The following is a 262-amino-acid chain: Type III pantothenate kinase (262 aa).

9–16 contributes to the ATP binding site; the sequence is DAGNSRIK. Substrate contacts are provided by residues Tyr-96 and 103–106; that span reads GSDR. Asp-105 functions as the Proton acceptor in the catalytic mechanism. Thr-129 lines the ATP pocket. Thr-189 contacts substrate.

Belongs to the type III pantothenate kinase family. In terms of assembly, homodimer. The cofactor is NH4(+). It depends on K(+) as a cofactor.

The protein localises to the cytoplasm. It catalyses the reaction (R)-pantothenate + ATP = (R)-4'-phosphopantothenate + ADP + H(+). It participates in cofactor biosynthesis; coenzyme A biosynthesis; CoA from (R)-pantothenate: step 1/5. In terms of biological role, catalyzes the phosphorylation of pantothenate (Pan), the first step in CoA biosynthesis. The chain is Type III pantothenate kinase from Burkholderia multivorans (strain ATCC 17616 / 249).